Consider the following 169-residue polypeptide: Ribosome maturation factor RimM (169 aa).

The region spanning 95–168 (EGNYYIFQIV…KMKVELLEGL (74 aa)) is the PRC barrel domain.

The protein belongs to the RimM family. As to quaternary structure, binds ribosomal protein uS19.

It localises to the cytoplasm. An accessory protein needed during the final step in the assembly of 30S ribosomal subunit, possibly for assembly of the head region. Essential for efficient processing of 16S rRNA. May be needed both before and after RbfA during the maturation of 16S rRNA. It has affinity for free ribosomal 30S subunits but not for 70S ribosomes. The sequence is that of Ribosome maturation factor RimM from Desulforamulus reducens (strain ATCC BAA-1160 / DSM 100696 / MI-1) (Desulfotomaculum reducens).